Reading from the N-terminus, the 957-residue chain is Collagen alpha-1(XXI) chain (957 aa).

Residues methionine 1–alanine 22 form the signal peptide. The VWFA domain maps to aspartate 37–leucine 211. Asparagine 62 carries N-linked (GlcNAc...) asparagine glycosylation. Residues glycine 230–proline 412 enclose the Laminin G-like domain. Collagen-like domains lie at proline 448 to glycine 500, leucine 501 to glycine 542, and serine 543 to alanine 594. 2 disordered regions span residues proline 448–arginine 786 and glycine 825–proline 938. Low complexity-rich tracts occupy residues proline 451–leucine 462 and glutamine 471–glutamine 481. Over residues glutamate 507–arginine 517 the composition is skewed to basic and acidic residues. Composition is skewed to low complexity over residues glutamine 618–proline 637 and glutamate 705–histidine 729. 4 consecutive Collagen-like domains span residues serine 681 to lysine 733, glycine 734 to glutamate 787, glycine 825 to glycine 882, and glycine 884 to glycine 934. Positions alanine 732–proline 742 are enriched in basic and acidic residues. A compositionally biased stretch (pro residues) spans isoleucine 829–proline 838. The segment covering glutamate 839–arginine 874 has biased composition (low complexity). Pro residues predominate over residues glutamine 889–proline 900.

The protein belongs to the fibril-associated collagens with interrupted helices (FACIT) family. In terms of tissue distribution, highly expressed in lymph node, jejunum, pancreas, stomach, trachea, testis, uterus and placenta; moderately expressed in brain, colon, lung, prostate, spinal cord, salivary gland and vascular smooth-muscle cells and very weakly expressed in heart, liver, kidney, bone marrow, spleen, thymus, skeletal muscle, adrenal gland and peripheral leukocytes. Expression in heart was higher in the right ventricle and atrium than in the left ventricle and atrium.

The protein resides in the secreted. It is found in the extracellular space. It localises to the extracellular matrix. Its subcellular location is the cytoplasm. This Homo sapiens (Human) protein is Collagen alpha-1(XXI) chain (COL21A1).